The following is a 231-amino-acid chain: Adenosine 5'-phosphosulfate reductase (231 aa).

Positions 118, 119, 201, and 204 each coordinate [4Fe-4S] cluster. The Nucleophile; cysteine thiosulfonate intermediate role is filled by C227.

The protein belongs to the PAPS reductase family. CysH subfamily. [4Fe-4S] cluster serves as cofactor.

The protein localises to the cytoplasm. The enzyme catalyses [thioredoxin]-disulfide + sulfite + AMP + 2 H(+) = adenosine 5'-phosphosulfate + [thioredoxin]-dithiol. It participates in sulfur metabolism; hydrogen sulfide biosynthesis; sulfite from sulfate. Functionally, catalyzes the formation of sulfite from adenosine 5'-phosphosulfate (APS) using thioredoxin as an electron donor. This Halalkalibacterium halodurans (strain ATCC BAA-125 / DSM 18197 / FERM 7344 / JCM 9153 / C-125) (Bacillus halodurans) protein is Adenosine 5'-phosphosulfate reductase.